The chain runs to 370 residues: Protein maelstrom 2 (370 aa).

The HMG box DNA-binding region spans 2–68; sequence AQNKPNAFMA…VLERESKTER (67 aa).

The protein belongs to the maelstrom family.

It is found in the cytoplasm. The protein localises to the nucleus. Involved both in the piRNA and miRNA metabolic processes. As a component of the meiotic nuage, plays a central role during oogenesis by repressing transposable elements and preventing their mobilization, which is essential for the germline integrity. Repression of transposable elements is mediated via the piRNA metabolic process, which mediates the repression of transposable elements during meiosis by forming complexes composed of piRNAs and Piwi proteins and governs the repression of transposons. As a nuclear component, it is required for proper differentiation in the germline stem cell (GSC) lineage by repressing microRNA-7 (miR-7), thereby acting as an indirect regulator of bag-of-marbles (Bam). Acts by binding to the promoter of miR-7 gene and repressing its expression; miR-7 repression alleviates the Bam repression by miR-7, thereby allowing differentiation in the germline stem cell (GSC) lineage. The chain is Protein maelstrom 2 (mael2) from Drosophila pseudoobscura pseudoobscura (Fruit fly).